The chain runs to 64 residues: Small ribosomal subunit protein bS21 (64 aa).

The disordered stretch occupies residues Pro-40–Phe-64. A compositionally biased stretch (basic residues) spans Arg-55 to Phe-64.

Belongs to the bacterial ribosomal protein bS21 family.

The protein is Small ribosomal subunit protein bS21 of Elusimicrobium minutum (strain Pei191).